Reading from the N-terminus, the 153-residue chain is Ribonuclease H (153 aa).

Positions 1–142 constitute an RNase H type-1 domain; it reads MRKKIEIFTD…CDELARIAAE (142 aa). Mg(2+)-binding residues include Asp-10, Glu-48, Asp-70, and Asp-134.

It belongs to the RNase H family. As to quaternary structure, monomer. The cofactor is Mg(2+).

It is found in the cytoplasm. It catalyses the reaction Endonucleolytic cleavage to 5'-phosphomonoester.. In terms of biological role, endonuclease that specifically degrades the RNA of RNA-DNA hybrids. This is Ribonuclease H from Baumannia cicadellinicola subsp. Homalodisca coagulata.